Here is a 275-residue protein sequence, read N- to C-terminus: ATP synthase subunit delta (275 aa).

It belongs to the ATPase delta chain family. As to quaternary structure, F-type ATPases have 2 components, F(1) - the catalytic core - and F(0) - the membrane proton channel. F(1) has five subunits: alpha(3), beta(3), gamma(1), delta(1), epsilon(1). F(0) has three main subunits: a(1), b(2) and c(10-14). The alpha and beta chains form an alternating ring which encloses part of the gamma chain. F(1) is attached to F(0) by a central stalk formed by the gamma and epsilon chains, while a peripheral stalk is formed by the delta and b chains.

Its subcellular location is the cell membrane. Functionally, f(1)F(0) ATP synthase produces ATP from ADP in the presence of a proton or sodium gradient. F-type ATPases consist of two structural domains, F(1) containing the extramembraneous catalytic core and F(0) containing the membrane proton channel, linked together by a central stalk and a peripheral stalk. During catalysis, ATP synthesis in the catalytic domain of F(1) is coupled via a rotary mechanism of the central stalk subunits to proton translocation. Its function is as follows. This protein is part of the stalk that links CF(0) to CF(1). It either transmits conformational changes from CF(0) to CF(1) or is implicated in proton conduction. The chain is ATP synthase subunit delta from Arthrobacter sp. (strain FB24).